A 214-amino-acid polypeptide reads, in one-letter code: Probable nicotinate-nucleotide adenylyltransferase (214 aa).

The protein belongs to the NadD family.

The enzyme catalyses nicotinate beta-D-ribonucleotide + ATP + H(+) = deamido-NAD(+) + diphosphate. The protein operates within cofactor biosynthesis; NAD(+) biosynthesis; deamido-NAD(+) from nicotinate D-ribonucleotide: step 1/1. In terms of biological role, catalyzes the reversible adenylation of nicotinate mononucleotide (NaMN) to nicotinic acid adenine dinucleotide (NaAD). This chain is Probable nicotinate-nucleotide adenylyltransferase, found in Thermomicrobium roseum (strain ATCC 27502 / DSM 5159 / P-2).